Here is a 156-residue protein sequence, read N- to C-terminus: Transcription inhibitor protein Gfh1 (156 aa).

Positions 1–74 (MAREVKLTKA…LEDILSRAVI (74 aa)) form a coiled coil. Residues Glu-20 and Glu-24 each coordinate Zn(2+).

It belongs to the GreA/GreB family. In terms of assembly, interacts with RNAP.

Its function is as follows. Inhibits all catalytic activities of RNA polymerase (RNAP) by partially occluding its substrate-binding site and preventing NTP binding. In Thermus thermophilus (strain ATCC 27634 / DSM 579 / HB8), this protein is Transcription inhibitor protein Gfh1 (gfh1).